The chain runs to 357 residues: Intracellular hyaluronan-binding protein 4 (357 aa).

3 disordered regions span residues 56-116 (VVAR…HKTA), 150-186 (ERPRGCGRGRGGMQGRGRGGGINKSFDGFDQRGKREF), and 313-357 (PGCG…PALT). A compositionally biased stretch (basic and acidic residues) spans 96-115 (PKQEECGGKDNSRAEKEHKT). The span at 155–171 (CGRGRGGMQGRGRGGGI) shows a compositional bias: gly residues. Over residues 176–186 (DGFDQRGKREF) the composition is skewed to basic and acidic residues. Acidic residues predominate over residues 348-357 (DDPEDFPALT).

This sequence belongs to the SERBP1-HABP4 family. Associates with ribosomes; promoting ribosome stabilization. Interacts with EEF2/eEF2; promoting ribosome stabilization.

Its subcellular location is the nucleus. It is found in the cytoplasm. The protein resides in the stress granule. The protein localises to the sarcoplasm. It localises to the nuclear body. Its subcellular location is the nucleolus. It is found in the nucleus speckle. The protein resides in the cajal body. The protein localises to the gem. Functionally, ribosome-binding protein that promotes ribosome hibernation, a process during which ribosomes are stabilized in an inactive state and preserved from proteasomal degradation. Acts via its association with EEF2/eEF2 factor at the A-site of the ribosome, promoting ribosome stabilization in an inactive state compatible with storage. Plays a key role in ribosome hibernation in the mature egg by promoting ribosome stabilization. Ribosomes, which are produced in large quantities during oogenesis, are stored and translationally repressed in the egg and early embryo. In Gallus gallus (Chicken), this protein is Intracellular hyaluronan-binding protein 4.